A 223-amino-acid chain; its full sequence is uncharacterized protein (223 aa).

The signal sequence occupies residues 1 to 17 (MLGQGLIFISLAFVAHA). N-linked (GlcNAc...) asparagine glycosylation occurs at N58. The interval 149 to 188 (VRKKGSRPSKPQKEKQGNKQGSKTEESPNVDEDELESEPE) is disordered. Over residues 159–174 (PQKEKQGNKQGSKTEE) the composition is skewed to basic and acidic residues. Positions 176–187 (PNVDEDELESEP) are enriched in acidic residues. Residues 191–211 (TFFQKYGLYLIPILFLIIMSG) form a helical membrane-spanning segment.

It localises to the endoplasmic reticulum membrane. This is an uncharacterized protein from Schizosaccharomyces pombe (strain 972 / ATCC 24843) (Fission yeast).